Reading from the N-terminus, the 447-residue chain is N-succinylarginine dihydrolase (447 aa).

Residues 19–28, Asn-110, and 137–138 contribute to the substrate site; these read AGLSFGNEAS and HR. Glu-174 is an active-site residue. Position 214 (Arg-214) interacts with substrate. Residue His-250 is part of the active site. Substrate is bound by residues Asp-252 and Asn-365. Catalysis depends on Cys-371, which acts as the Nucleophile.

It belongs to the succinylarginine dihydrolase family. As to quaternary structure, homodimer.

The enzyme catalyses N(2)-succinyl-L-arginine + 2 H2O + 2 H(+) = N(2)-succinyl-L-ornithine + 2 NH4(+) + CO2. Its pathway is amino-acid degradation; L-arginine degradation via AST pathway; L-glutamate and succinate from L-arginine: step 2/5. In terms of biological role, catalyzes the hydrolysis of N(2)-succinylarginine into N(2)-succinylornithine, ammonia and CO(2). The protein is N-succinylarginine dihydrolase of Acinetobacter baumannii (strain SDF).